We begin with the raw amino-acid sequence, 201 residues long: Elongation factor Ts (201 aa).

Residues Thr83–Val86 are involved in Mg(2+) ion dislocation from EF-Tu.

It belongs to the EF-Ts family.

It is found in the cytoplasm. Its function is as follows. Associates with the EF-Tu.GDP complex and induces the exchange of GDP to GTP. It remains bound to the aminoacyl-tRNA.EF-Tu.GTP complex up to the GTP hydrolysis stage on the ribosome. The polypeptide is Elongation factor Ts (Methylacidiphilum infernorum (isolate V4) (Methylokorus infernorum (strain V4))).